Consider the following 213-residue polypeptide: Uridine kinase (213 aa).

14–21 (GASASGKS) serves as a coordination point for ATP.

The protein belongs to the uridine kinase family.

It is found in the cytoplasm. It carries out the reaction uridine + ATP = UMP + ADP + H(+). The enzyme catalyses cytidine + ATP = CMP + ADP + H(+). It participates in pyrimidine metabolism; CTP biosynthesis via salvage pathway; CTP from cytidine: step 1/3. Its pathway is pyrimidine metabolism; UMP biosynthesis via salvage pathway; UMP from uridine: step 1/1. The sequence is that of Uridine kinase from Vibrio cholerae serotype O1 (strain ATCC 39315 / El Tor Inaba N16961).